We begin with the raw amino-acid sequence, 279 residues long: Protease HtpX homolog (279 aa).

Helical transmembrane passes span 4–24 (IFLF…VLAV) and 34–54 (GSLL…SLLM). A Zn(2+)-binding site is contributed by His-140. Glu-141 is a catalytic residue. Zn(2+) is bound at residue His-144. The next 2 helical transmembrane spans lie at 155-175 (LIQG…ANLI) and 189-209 (FLVS…IVMW). Glu-215 serves as a coordination point for Zn(2+).

It belongs to the peptidase M48B family. Requires Zn(2+) as cofactor.

It is found in the cell inner membrane. This Neisseria meningitidis serogroup B (strain ATCC BAA-335 / MC58) protein is Protease HtpX homolog.